Reading from the N-terminus, the 464-residue chain is ATP synthase subunit beta (464 aa).

Residue glycine 148–threonine 155 coordinates ATP.

Belongs to the ATPase alpha/beta chains family. In terms of assembly, F-type ATPases have 2 components, CF(1) - the catalytic core - and CF(0) - the membrane proton channel. CF(1) has five subunits: alpha(3), beta(3), gamma(1), delta(1), epsilon(1). CF(0) has three main subunits: a(1), b(2) and c(9-12). The alpha and beta chains form an alternating ring which encloses part of the gamma chain. CF(1) is attached to CF(0) by a central stalk formed by the gamma and epsilon chains, while a peripheral stalk is formed by the delta and b chains.

Its subcellular location is the cell inner membrane. The enzyme catalyses ATP + H2O + 4 H(+)(in) = ADP + phosphate + 5 H(+)(out). In terms of biological role, produces ATP from ADP in the presence of a proton gradient across the membrane. The catalytic sites are hosted primarily by the beta subunits. This is ATP synthase subunit beta from Acinetobacter baylyi (strain ATCC 33305 / BD413 / ADP1).